The sequence spans 261 residues: Carnitinyl-CoA dehydratase (261 aa).

The Nucleophile role is filled by Glu111. Glu131 serves as the catalytic Proton acceptor.

It belongs to the enoyl-CoA hydratase/isomerase family.

It catalyses the reaction (R)-carnitinyl-CoA = crotonobetainyl-CoA + H2O. Its pathway is amine and polyamine metabolism; carnitine metabolism. Its function is as follows. Catalyzes the reversible dehydration of L-carnitinyl-CoA to crotonobetainyl-CoA. The sequence is that of Carnitinyl-CoA dehydratase from Escherichia coli (strain ATCC 8739 / DSM 1576 / NBRC 3972 / NCIMB 8545 / WDCM 00012 / Crooks).